Reading from the N-terminus, the 209-residue chain is Imidazole glycerol phosphate synthase subunit HisH (209 aa).

The region spanning 1–205 (MIAIIDYGMG…KGVVETWKSS (205 aa)) is the Glutamine amidotransferase type-1 domain. The Nucleophile role is filled by Cys-79. Active-site residues include His-180 and Glu-182.

In terms of assembly, heterodimer of HisH and HisF.

The protein localises to the cytoplasm. It carries out the reaction 5-[(5-phospho-1-deoxy-D-ribulos-1-ylimino)methylamino]-1-(5-phospho-beta-D-ribosyl)imidazole-4-carboxamide + L-glutamine = D-erythro-1-(imidazol-4-yl)glycerol 3-phosphate + 5-amino-1-(5-phospho-beta-D-ribosyl)imidazole-4-carboxamide + L-glutamate + H(+). It catalyses the reaction L-glutamine + H2O = L-glutamate + NH4(+). It functions in the pathway amino-acid biosynthesis; L-histidine biosynthesis; L-histidine from 5-phospho-alpha-D-ribose 1-diphosphate: step 5/9. Its function is as follows. IGPS catalyzes the conversion of PRFAR and glutamine to IGP, AICAR and glutamate. The HisH subunit catalyzes the hydrolysis of glutamine to glutamate and ammonia as part of the synthesis of IGP and AICAR. The resulting ammonia molecule is channeled to the active site of HisF. In Bacillus anthracis (strain A0248), this protein is Imidazole glycerol phosphate synthase subunit HisH.